The sequence spans 693 residues: G1/S-specific cyclin CCN1 (693 aa).

Residues 273 to 298 show a composition bias toward polar residues; that stretch reads QKKQKKALSSNSSRTTTASYTHQNQS. Disordered regions lie at residues 273-320, 465-571, 595-615, and 662-693; these read QKKQ…EDDD, DEDE…PPGS, SNSS…EKRY, and NNTN…QYHQ. Acidic residues-rich tracts occupy residues 306 to 320 and 465 to 476; these read DEDI…EDDD and DEDENVSTDDEA. Polar residues-rich tracts occupy residues 489–516 and 524–563; these read DGNN…NHPQ and PSAT…SSFA. Low complexity predominate over residues 666 to 685; it reads SSSPLMNQQQQQQVTQSSLY.

This sequence belongs to the cyclin family. In terms of assembly, interacts with CDC28. The CDC28-CCN1 complex associates with septin CDC11 upon hyphal induction.

G1/S-specific cyclin essential for the control of the cell cycle at the G1/S (start) transition and for maintenance of filamentous growth. Through binding to CDC28 controls the phosphorylation of CDC11 and SEC2 upon induction of filamentous growth. The chain is G1/S-specific cyclin CCN1 (CCN1) from Candida albicans (strain SC5314 / ATCC MYA-2876) (Yeast).